We begin with the raw amino-acid sequence, 225 residues long: Membrin-11 (225 aa).

Ala-2 is subject to N-acetylalanine. Residues Ala-2–Arg-200 lie on the Cytoplasmic side of the membrane. Residues Val-201 to Ile-221 form a helical; Anchor for type IV membrane protein membrane-spanning segment. Residues Arg-222–Arg-225 lie on the Vesicular side of the membrane.

Belongs to the GOSR2 family.

The protein localises to the golgi apparatus membrane. Involved in transport of proteins from the cis/medial-Golgi to the trans-Golgi network. This Arabidopsis thaliana (Mouse-ear cress) protein is Membrin-11 (MEMB11).